The following is a 347-amino-acid chain: GMP reductase (347 aa).

108–131 contacts NADP(+); sequence ADFEKTKQILDLNPALNFVCIDVA. K(+) is bound by residues Gly-181 and Gly-183. The Thioimidate intermediate role is filled by Cys-186. NADP(+) is bound at residue 216 to 239; that stretch reads IVSDGGCTTPGDVAKAFGGGADFV.

The protein belongs to the IMPDH/GMPR family. GuaC type 1 subfamily. As to quaternary structure, homotetramer.

The enzyme catalyses IMP + NH4(+) + NADP(+) = GMP + NADPH + 2 H(+). In terms of biological role, catalyzes the irreversible NADPH-dependent deamination of GMP to IMP. It functions in the conversion of nucleobase, nucleoside and nucleotide derivatives of G to A nucleotides, and in maintaining the intracellular balance of A and G nucleotides. The protein is GMP reductase of Escherichia coli O139:H28 (strain E24377A / ETEC).